Reading from the N-terminus, the 805-residue chain is Shutoff protein (805 aa).

The segment at 1 to 88 (MESVEKEDSL…QVGRGDQRHG (88 aa)) is disordered. Residues 18–29 (TTASTDAANAPT) are compositionally biased toward polar residues. Basic and acidic residues-rich tracts occupy residues 59 to 70 (RSVPTEDKKQDQ) and 79 to 88 (QVGRGDQRHG). Residues 280-345 (VMSELIVRRA…AVLVTVELEC (66 aa)) form a binding to host EIF4G region. Residues 348–466 (RFFADPEMQR…DLWTAFNERS (119 aa)) form the RRM domain. Phosphotyrosine; by host occurs at positions 365 and 682. The segment at 684–805 (DPQSGEELNP…AGTACSPTQP (122 aa)) is disordered. Residues 726–742 (GRGGILGQSGRGGFGRG) are compositionally biased toward gly residues. Positions 754–763 (RSFRGRRGVR) are enriched in basic residues.

Belongs to the adenoviridae shutoff protein family. In terms of assembly, monomer. Interacts with hexon protein; this interaction allows chaperoning and trimerization of hexon proteins. Interacts (via N-terminus) with host initiation factor EIF4G (via C-terminus). Interacts (via RRM domain) with viral mRNAs that contain the tripartite leader; this interaction allows ribosome shunting and expression of viral late mRNAs. In terms of processing, might be cleaved by the viral protease. Post-translationally, phosphorylated. Tyrosine phosphorylation enhances preferential binding to tripartite leader mRNAs and allows ribosome shunting. Methylated. Asymmetric dimethylation by host PRMT1 of the Arg/Gly-rich region may regulate shutoff protein binding to hexon and promote the capsid assembly in the nucleus.

It is found in the host cytoplasm. Functionally, protein that inhibits host translation while promoting late viral translation by ribosome shunting. Blocks host cap-dependent translation by binding to eIF4G, displacing MKNK1 from cap initiation complexes and preventing EIF4E phosphorylation. Binds to the tripartite leader sequence of viral late mRNAs and recruits host eIF4G, PABPC1/poly-A binding protein and 40S ribosomes subunits on viral mRNAs, allowing ribosome shunting and efficient translation of late viral mRNAs even though conventional translation via ribosome scanning from the cap has been shut off in the host cell. During assembly, acts as a chaperone protein that helps hexon proteins assembly into trimers. This Homo sapiens (Human) protein is Shutoff protein.